We begin with the raw amino-acid sequence, 377 residues long: Succinyl-diaminopimelate desuccinylase (377 aa).

His66 contacts Zn(2+). Residue Asp68 is part of the active site. Asp99 serves as a coordination point for Zn(2+). The active-site Proton acceptor is the Glu133. The Zn(2+) site is built by Glu134, Glu162, and His348.

It belongs to the peptidase M20A family. DapE subfamily. As to quaternary structure, homodimer. Requires Zn(2+) as cofactor. Co(2+) is required as a cofactor.

The catalysed reaction is N-succinyl-(2S,6S)-2,6-diaminopimelate + H2O = (2S,6S)-2,6-diaminopimelate + succinate. It functions in the pathway amino-acid biosynthesis; L-lysine biosynthesis via DAP pathway; LL-2,6-diaminopimelate from (S)-tetrahydrodipicolinate (succinylase route): step 3/3. In terms of biological role, catalyzes the hydrolysis of N-succinyl-L,L-diaminopimelic acid (SDAP), forming succinate and LL-2,6-diaminopimelate (DAP), an intermediate involved in the bacterial biosynthesis of lysine and meso-diaminopimelic acid, an essential component of bacterial cell walls. The chain is Succinyl-diaminopimelate desuccinylase from Methylococcus capsulatus (strain ATCC 33009 / NCIMB 11132 / Bath).